Here is an 899-residue protein sequence, read N- to C-terminus: Translation initiation factor IF-2 (899 aa).

Disordered stretches follow at residues 116–135, 170–189, and 262–306; these read AKAR…ARLQ, RGGG…EQKK, and DREI…ANKH. The 170-residue stretch at 399 to 568 folds into the tr-type G domain; the sequence is TRPPVVTIMG…LIQSELMELK (170 aa). Residues 408 to 415 are G1; the sequence is GHVDHGKT. 408–415 provides a ligand contact to GTP; that stretch reads GHVDHGKT. The G2 stretch occupies residues 433 to 437; that stretch reads GITQH. The tract at residues 454 to 457 is G3; it reads DTPG. GTP-binding positions include 454–458 and 508–511; these read DTPGH and NKMD. The tract at residues 508-511 is G4; sequence NKMD. A G5 region spans residues 544 to 546; sequence SAH.

Belongs to the TRAFAC class translation factor GTPase superfamily. Classic translation factor GTPase family. IF-2 subfamily.

It localises to the cytoplasm. One of the essential components for the initiation of protein synthesis. Protects formylmethionyl-tRNA from spontaneous hydrolysis and promotes its binding to the 30S ribosomal subunits. Also involved in the hydrolysis of GTP during the formation of the 70S ribosomal complex. In Acinetobacter baumannii (strain AB307-0294), this protein is Translation initiation factor IF-2.